We begin with the raw amino-acid sequence, 603 residues long: UvrABC system protein C (603 aa).

In terms of domain architecture, GIY-YIG spans 14–92; sequence ELPGVYRMLD…IKSLAPRYNI (79 aa). Residues 201–236 form the UVR domain; that stretch reads QEVTRRLTKSMEEASAKLAFEQAAVFRDQIQSLHQV.

This sequence belongs to the UvrC family. Interacts with UvrB in an incision complex.

It localises to the cytoplasm. In terms of biological role, the UvrABC repair system catalyzes the recognition and processing of DNA lesions. UvrC both incises the 5' and 3' sides of the lesion. The N-terminal half is responsible for the 3' incision and the C-terminal half is responsible for the 5' incision. The sequence is that of UvrABC system protein C from Dechloromonas aromatica (strain RCB).